Consider the following 187-residue polypeptide: UPF0340 protein SPG_0604 (187 aa).

Belongs to the UPF0340 family.

This is UPF0340 protein SPG_0604 from Streptococcus pneumoniae serotype 19F (strain G54).